An 876-amino-acid chain; its full sequence is Alanine--tRNA ligase (876 aa).

K74 carries the post-translational modification N6-acetyllysine. Residues H564, H568, C666, and H670 each contribute to the Zn(2+) site.

It belongs to the class-II aminoacyl-tRNA synthetase family. In terms of assembly, homotetramer. Requires Zn(2+) as cofactor.

Its subcellular location is the cytoplasm. The enzyme catalyses tRNA(Ala) + L-alanine + ATP = L-alanyl-tRNA(Ala) + AMP + diphosphate. Its function is as follows. Catalyzes the attachment of alanine to tRNA(Ala) in a two-step reaction: alanine is first activated by ATP to form Ala-AMP and then transferred to the acceptor end of tRNA(Ala). Also edits incorrectly charged Ser-tRNA(Ala) and Gly-tRNA(Ala) via its editing domain. This chain is Alanine--tRNA ligase, found in Shigella flexneri serotype 5b (strain 8401).